A 316-amino-acid chain; its full sequence is Taste receptor type 2 member 3 (316 aa).

At M1 to E6 the chain is on the extracellular side. Residues G7–I27 form a helical membrane-spanning segment. Over E28–S42 the chain is Cytoplasmic. A helical transmembrane segment spans residues L43 to L63. Residues T64–H94 lie on the Extracellular side of the membrane. Residues L95–S115 traverse the membrane as a helical segment. Residues H116–R128 lie on the Cytoplasmic side of the membrane. The chain crosses the membrane as a helical span at residues V129–I149. Residues N150 to T186 lie on the Extracellular side of the membrane. N166 carries N-linked (GlcNAc...) asparagine glycosylation. A helical transmembrane segment spans residues L187 to L207. Topologically, residues G208–R234 are cytoplasmic. A helical transmembrane segment spans residues I235–F255. Residues G256 to K266 lie on the Extracellular side of the membrane. A helical transmembrane segment spans residues M267–G287. At N288–S316 the chain is on the cytoplasmic side.

Belongs to the G-protein coupled receptor T2R family. Expressed in subsets of taste receptor cells of the tongue and palate epithelium and exclusively in gustducin-positive cells. Expressed in the antrum and fundus (part of the stomach), duodenum and in gastric endocrine cells.

It localises to the membrane. Gustducin-coupled receptor implicated in the perception of bitter compounds in the oral cavity and the gastrointestinal tract. Signals through PLCB2 and the calcium-regulated cation channel TRPM5. The chain is Taste receptor type 2 member 3 (TAS2R3) from Homo sapiens (Human).